A 382-amino-acid polypeptide reads, in one-letter code: Dual-specificity RNA methyltransferase RlmN (382 aa).

Catalysis depends on E113, which acts as the Proton acceptor. The Radical SAM core domain maps to 119–358; that stretch reads EINRATLCIS…TTIRKQRGID (240 aa). C126 and C363 are joined by a disulfide. The [4Fe-4S] cluster site is built by C133, C137, and C140. S-adenosyl-L-methionine-binding positions include 187 to 188, S219, 241 to 243, and N320; these read GE and SLH. C363 functions as the S-methylcysteine intermediate in the catalytic mechanism.

The protein belongs to the radical SAM superfamily. RlmN family. [4Fe-4S] cluster serves as cofactor.

Its subcellular location is the cytoplasm. The enzyme catalyses adenosine(2503) in 23S rRNA + 2 reduced [2Fe-2S]-[ferredoxin] + 2 S-adenosyl-L-methionine = 2-methyladenosine(2503) in 23S rRNA + 5'-deoxyadenosine + L-methionine + 2 oxidized [2Fe-2S]-[ferredoxin] + S-adenosyl-L-homocysteine. It catalyses the reaction adenosine(37) in tRNA + 2 reduced [2Fe-2S]-[ferredoxin] + 2 S-adenosyl-L-methionine = 2-methyladenosine(37) in tRNA + 5'-deoxyadenosine + L-methionine + 2 oxidized [2Fe-2S]-[ferredoxin] + S-adenosyl-L-homocysteine. Specifically methylates position 2 of adenine 2503 in 23S rRNA and position 2 of adenine 37 in tRNAs. m2A2503 modification seems to play a crucial role in the proofreading step occurring at the peptidyl transferase center and thus would serve to optimize ribosomal fidelity. The protein is Dual-specificity RNA methyltransferase RlmN of Wigglesworthia glossinidia brevipalpis.